The chain runs to 703 residues: Fanconi-associated nuclease 1 homolog (703 aa).

Glu529, Asp651, Glu666, and Val667 together coordinate Mn(2+). Residues 597 to 698 (YIREHQRKTF…EVDVEVCHVS (102 aa)) enclose the VRR-NUC domain.

The protein belongs to the FAN1 family. Mn(2+) is required as a cofactor. Mg(2+) serves as cofactor.

It is found in the nucleus. It carries out the reaction Hydrolytically removes 5'-nucleotides successively from the 3'-hydroxy termini of 3'-hydroxy-terminated oligonucleotides.. Functionally, nuclease required for the repair of DNA interstrand cross-links (ICL). Acts as a 5'-3' exonuclease that anchors at a cut end of DNA and cleaves DNA successively at every third nucleotide, allowing to excise an ICL from one strand through flanking incisions. The chain is Fanconi-associated nuclease 1 homolog from Schizosaccharomyces pombe (strain 972 / ATCC 24843) (Fission yeast).